Here is a 305-residue protein sequence, read N- to C-terminus: tRNA pseudouridine synthase B (305 aa).

Catalysis depends on Asp41, which acts as the Nucleophile.

It belongs to the pseudouridine synthase TruB family. Type 1 subfamily.

The catalysed reaction is uridine(55) in tRNA = pseudouridine(55) in tRNA. In terms of biological role, responsible for synthesis of pseudouridine from uracil-55 in the psi GC loop of transfer RNAs. This is tRNA pseudouridine synthase B from Prochlorococcus marinus (strain MIT 9515).